The primary structure comprises 184 residues: Putative serine carboxypeptidase-like 52 (184 aa).

Residues 1–22 (MRTFSPKLLLLLLLVLRHHAES) form the signal peptide. Asn93 carries N-linked (GlcNAc...) asparagine glycosylation.

It belongs to the peptidase S10 family.

Its subcellular location is the secreted. This Arabidopsis thaliana (Mouse-ear cress) protein is Putative serine carboxypeptidase-like 52 (SCPL52).